A 229-amino-acid polypeptide reads, in one-letter code: NAD(P)H-hydrate epimerase (229 aa).

The region spanning 10–217 (AINVDLELFN…ALQRKYELNL (208 aa)) is the YjeF N-terminal domain. 60–64 (NNGGD) serves as a coordination point for (6S)-NADPHX. Residues Asn61 and Asp125 each coordinate K(+). Residues 129-135 (GFSFKPP) and Asp158 each bind (6S)-NADPHX. Ser161 serves as a coordination point for K(+).

It belongs to the NnrE/AIBP family. The cofactor is K(+).

The catalysed reaction is (6R)-NADHX = (6S)-NADHX. It carries out the reaction (6R)-NADPHX = (6S)-NADPHX. Functionally, catalyzes the epimerization of the S- and R-forms of NAD(P)HX, a damaged form of NAD(P)H that is a result of enzymatic or heat-dependent hydration. This is a prerequisite for the S-specific NAD(P)H-hydrate dehydratase to allow the repair of both epimers of NAD(P)HX. The protein is NAD(P)H-hydrate epimerase of Drosophila mojavensis (Fruit fly).